The chain runs to 257 residues: Probable enoyl-CoA hydratase echA8 (257 aa).

It belongs to the enoyl-CoA hydratase/isomerase family.

The enzyme catalyses a (3S)-3-hydroxyacyl-CoA = a (2E)-enoyl-CoA + H2O. The catalysed reaction is a 4-saturated-(3S)-3-hydroxyacyl-CoA = a (3E)-enoyl-CoA + H2O. In terms of biological role, could possibly oxidize fatty acids using specific components. The polypeptide is Probable enoyl-CoA hydratase echA8 (echA8) (Mycobacterium leprae (strain TN)).